The following is a 552-amino-acid chain: Arginine--tRNA ligase (552 aa).

The short motif at 129–139 (ANPTGPVTLAS) is the 'HIGH' region element.

The protein belongs to the class-I aminoacyl-tRNA synthetase family. In terms of assembly, monomer.

The protein resides in the cytoplasm. It catalyses the reaction tRNA(Arg) + L-arginine + ATP = L-arginyl-tRNA(Arg) + AMP + diphosphate. This is Arginine--tRNA ligase from Frankia alni (strain DSM 45986 / CECT 9034 / ACN14a).